The following is a 531-amino-acid chain: Probable mitochondrial-processing peptidase subunit beta, mitochondrial (531 aa).

Residues 1–78 (MAMKNLLSLA…ENPDKRFLKY (78 aa)) constitute a mitochondrion transit peptide. Residues 30–50 (SAIDSVPASASPTALSPPPPH) form a disordered region. Residue histidine 141 participates in Zn(2+) binding. Glutamate 144 functions as the Proton acceptor in the catalytic mechanism. Histidine 145 is a Zn(2+) binding site. Glutamate 214 is an active-site residue. Glutamate 221 serves as a coordination point for Zn(2+).

The protein belongs to the peptidase M16 family. Heterodimer of an alpha subunit and a beta subunit subunits, forming the mitochondrial processing protease (MPP) in which the alpha subunit is involved in substrate recognition and binding and the beta subunit is the catalytic subunit. Component of the ubiquinol-cytochrome c oxidoreductase (cytochrome b-c1 complex, complex III, CIII), a multisubunit enzyme composed of 10 subunits. The complex is composed of 3 respiratory subunits cytochrome b (MT-CYB), cytochrome c1 (CYC1-1 or CYC1-2) and Rieske protein (UCR1-1 or UCR1-2), 2 core protein subunits MPPalpha1 (or MPPalpha2) and MPPB, and 5 low-molecular weight protein subunits QCR7-1 (or QCR7-2), UCRQ-1 (or UCRQ-2), QCR9, UCRY and probably QCR6-1 (or QCR6-2). The complex exists as an obligatory dimer and forms supercomplexes (SCs) in the inner mitochondrial membrane with NADH-ubiquinone oxidoreductase (complex I, CI), resulting in different assemblies (supercomplexes SCI(1)III(2) and SCI(2)III(4)). The cofactor is Zn(2+).

It localises to the mitochondrion. The protein resides in the mitochondrion inner membrane. It carries out the reaction Release of N-terminal transit peptides from precursor proteins imported into the mitochondrion, typically with Arg in position P2.. With respect to regulation, binding to the alpha subunit is required for catalytic activity. In terms of biological role, catalytic subunit of the essential mitochondrial processing protease (MPP), which cleaves the mitochondrial sequence off newly imported precursors proteins. Preferentially, cleaves after an arginine at position P2. Component of the ubiquinol-cytochrome c oxidoreductase, a multisubunit transmembrane complex that is part of the mitochondrial electron transport chain which drives oxidative phosphorylation. The respiratory chain contains 3 multisubunit complexes succinate dehydrogenase (complex II, CII), ubiquinol-cytochrome c oxidoreductase (cytochrome b-c1 complex, complex III, CIII) and cytochrome c oxidase (complex IV, CIV), that cooperate to transfer electrons derived from NADH and succinate to molecular oxygen, creating an electrochemical gradient over the inner membrane that drives transmembrane transport and the ATP synthase. The cytochrome b-c1 complex catalyzes electron transfer from ubiquinol to cytochrome c, linking this redox reaction to translocation of protons across the mitochondrial inner membrane, with protons being carried across the membrane as hydrogens on the quinol. In the process called Q cycle, 2 protons are consumed from the matrix, 4 protons are released into the intermembrane space and 2 electrons are passed to cytochrome c. The chain is Probable mitochondrial-processing peptidase subunit beta, mitochondrial (MPPbeta) from Arabidopsis thaliana (Mouse-ear cress).